An 879-amino-acid polypeptide reads, in one-letter code: Alanine--tRNA ligase (879 aa).

4 residues coordinate Zn(2+): His565, His569, Cys674, and His678.

This sequence belongs to the class-II aminoacyl-tRNA synthetase family. Requires Zn(2+) as cofactor.

The protein resides in the cytoplasm. The catalysed reaction is tRNA(Ala) + L-alanine + ATP = L-alanyl-tRNA(Ala) + AMP + diphosphate. Functionally, catalyzes the attachment of alanine to tRNA(Ala) in a two-step reaction: alanine is first activated by ATP to form Ala-AMP and then transferred to the acceptor end of tRNA(Ala). Also edits incorrectly charged Ser-tRNA(Ala) and Gly-tRNA(Ala) via its editing domain. In Gluconobacter oxydans (strain 621H) (Gluconobacter suboxydans), this protein is Alanine--tRNA ligase.